The following is a 154-amino-acid chain: Ribonuclease K6 (154 aa).

Residues 1 to 27 form the signal peptide; sequence MGPHLLGRSSLLLLLLGMWWSVRPLCA. Residue histidine 42 is the Proton acceptor of the active site. Disulfide bonds link cysteine 50–cysteine 108, cysteine 64–cysteine 118, cysteine 82–cysteine 133, and cysteine 89–cysteine 96. Asparagine 59 carries an N-linked (GlcNAc...) asparagine glycan. Substrate-binding positions include 65–69 and lysine 90; that span reads KPENT. N-linked (GlcNAc...) asparagine glycosylation is present at asparagine 104. Histidine 149 acts as the Proton donor in catalysis.

This sequence belongs to the pancreatic ribonuclease family. In terms of assembly, interacts (via N-terminus) with bacterial lipopolysaccharide (LPS). In terms of tissue distribution, kidney (at protein level).

It is found in the secreted. Its subcellular location is the lysosome. It localises to the cytoplasmic granule. In terms of biological role, ribonuclease which shows a preference for the pyrimidines uridine and cytosine. Has potent antimicrobial activity against a range of Gram-positive and Gram-negative bacteria, including P.aeruginosa, A.baumanii, M.luteus, S.aureus, E.faecalis, E.faecium, S.saprophyticus and E.coli. Causes loss of bacterial membrane integrity, and also promotes agglutination of Gram-negative bacteria. Probably contributes to urinary tract sterility. Bactericidal activity is independent of RNase activity. The polypeptide is Ribonuclease K6 (RNASE6) (Bos taurus (Bovine)).